The sequence spans 277 residues: 3-methyl-2-oxobutanoate hydroxymethyltransferase (277 aa).

Residues Asp43 and Asp82 each contribute to the Mg(2+) site. 3-methyl-2-oxobutanoate contacts are provided by residues Asp43–Ser44, Asp82, and Lys112. Glu114 serves as a coordination point for Mg(2+). Residue Glu181 is the Proton acceptor of the active site.

It belongs to the PanB family. Homodecamer; pentamer of dimers. Mg(2+) serves as cofactor.

The protein resides in the cytoplasm. The enzyme catalyses 3-methyl-2-oxobutanoate + (6R)-5,10-methylene-5,6,7,8-tetrahydrofolate + H2O = 2-dehydropantoate + (6S)-5,6,7,8-tetrahydrofolate. It functions in the pathway cofactor biosynthesis; (R)-pantothenate biosynthesis; (R)-pantoate from 3-methyl-2-oxobutanoate: step 1/2. Catalyzes the reversible reaction in which hydroxymethyl group from 5,10-methylenetetrahydrofolate is transferred onto alpha-ketoisovalerate to form ketopantoate. The protein is 3-methyl-2-oxobutanoate hydroxymethyltransferase of Listeria innocua serovar 6a (strain ATCC BAA-680 / CLIP 11262).